Here is a 218-residue protein sequence, read N- to C-terminus: 7-cyano-7-deazaguanine synthase 1 (218 aa).

9–19 (YSGGMDSFTVL) is a binding site for ATP. The Zn(2+) site is built by Cys-185, Cys-193, Cys-196, and Cys-199.

The protein belongs to the QueC family. Zn(2+) serves as cofactor.

The catalysed reaction is 7-carboxy-7-deazaguanine + NH4(+) + ATP = 7-cyano-7-deazaguanine + ADP + phosphate + H2O + H(+). Its pathway is purine metabolism; 7-cyano-7-deazaguanine biosynthesis. Functionally, catalyzes the ATP-dependent conversion of 7-carboxy-7-deazaguanine (CDG) to 7-cyano-7-deazaguanine (preQ(0)). The sequence is that of 7-cyano-7-deazaguanine synthase 1 from Colwellia psychrerythraea (strain 34H / ATCC BAA-681) (Vibrio psychroerythus).